We begin with the raw amino-acid sequence, 302 residues long: UPF0725 protein At1g23960 (302 aa).

Ala2 is modified (N-acetylalanine).

The protein belongs to the UPF0725 (EMB2204) family.

This is UPF0725 protein At1g23960 from Arabidopsis thaliana (Mouse-ear cress).